Here is a 413-residue protein sequence, read N- to C-terminus: MTDNRVENSSGRAARKLRLALMGPAFIAAIGYIDPGNFATNIQAGASFGYQLLWVVVWANLMAMLIQILSAKLGIATGKNLAEQIRDHYPRPVVWFYWVQAEIIAMATDLAEFIGAAIGFKLILGVSLLQGAVLTGIATFLILMLQRRGQKPLEKVIGGLLLFVAAAYIVELFFSQPDMAQLGKGMVIPALPNPEAVFLAAGVLGATIMPHVIYLHSSLTQHLHGGTRQQRYSATKWDVAIAMTIAGFVNLAMMATAAAAFHFSGHTGIADLDQAYLTLEPLLSHAAATVFGLSLVAAGLSSTVVGTLAGQVVMQGFVRFHIPLWVRRSITMLPSFIVILMGLDPTRILVMSQVLLSFGIALALVPLLIFTSNATLMGELVNTRRVKQIGWIIVVLVVALNIWLLVGTVMGLS.

Residues 1-19 (MTDNRVENSSGRAARKLRL) are Cytoplasmic-facing. Residues 20-39 (ALMGPAFIAAIGYIDPGNFA) traverse the membrane as a helical segment. The Periplasmic portion of the chain corresponds to 40–51 (TNIQAGASFGYQ). A helical transmembrane segment spans residues 52-71 (LLWVVVWANLMAMLIQILSA). Topologically, residues 72-95 (KLGIATGKNLAEQIRDHYPRPVVW) are cytoplasmic. The chain crosses the membrane as a helical span at residues 96 to 118 (FYWVQAEIIAMATDLAEFIGAAI). Over 119 to 125 (GFKLILG) the chain is Periplasmic. A helical membrane pass occupies residues 126–145 (VSLLQGAVLTGIATFLILML). The Cytoplasmic portion of the chain corresponds to 146–155 (QRRGQKPLEK). A helical transmembrane segment spans residues 156-175 (VIGGLLLFVAAAYIVELFFS). The Periplasmic portion of the chain corresponds to 176 to 196 (QPDMAQLGKGMVIPALPNPEA). A helical membrane pass occupies residues 197-220 (VFLAAGVLGATIMPHVIYLHSSLT). Residues 221 to 238 (QHLHGGTRQQRYSATKWD) lie on the Cytoplasmic side of the membrane. Residues 239 to 258 (VAIAMTIAGFVNLAMMATAA) traverse the membrane as a helical segment. Residues 259–276 (AAFHFSGHTGIADLDQAY) are Periplasmic-facing. Residues 277–297 (LTLEPLLSHAAATVFGLSLVA) traverse the membrane as a helical segment. Residues 298–327 (AGLSSTVVGTLAGQVVMQGFVRFHIPLWVR) lie on the Cytoplasmic side of the membrane. A helical membrane pass occupies residues 328–344 (RSITMLPSFIVILMGLD). Over 345–350 (PTRILV) the chain is Periplasmic. The helical transmembrane segment at 351-370 (MSQVLLSFGIALALVPLLIF) threads the bilayer. Topologically, residues 371–387 (TSNATLMGELVNTRRVK) are cytoplasmic. A helical transmembrane segment spans residues 388-406 (QIGWIIVVLVVALNIWLLV). Residues 407-413 (GTVMGLS) are Periplasmic-facing.

This sequence belongs to the NRAMP family.

It is found in the cell inner membrane. H(+)-stimulated, divalent metal cation uptake system. The sequence is that of Divalent metal cation transporter MntH from Salmonella gallinarum (strain 287/91 / NCTC 13346).